The following is a 290-amino-acid chain: Putative beta-lactamase HcpC (290 aa).

Residues 1–25 form the signal peptide; sequence MLENVKKSFFRVLCLGALCLGGLMA. TPR repeat units follow at residues 29–62, 64–98, 100–133, 134–170, 172–205, 206–242, and 244–278; these read PKEL…KENS, CFNL…NYSN, CHLL…LKYA, EGCA…NDGD, CTIL…LKDS, PGCF…ENGG, and CFNL…GAKG. 7 disulfide bridges follow: cysteine 56–cysteine 64, cysteine 92–cysteine 100, cysteine 128–cysteine 136, cysteine 164–cysteine 172, cysteine 200–cysteine 208, cysteine 236–cysteine 244, and cysteine 272–cysteine 280.

This sequence belongs to the hcp beta-lactamase family.

Its subcellular location is the secreted. It catalyses the reaction a beta-lactam + H2O = a substituted beta-amino acid. May hydrolyze 6-aminopenicillinic acid and 7-aminocephalosporanic acid (ACA) derivatives. The sequence is that of Putative beta-lactamase HcpC (hcpC) from Helicobacter pylori (strain ATCC 700392 / 26695) (Campylobacter pylori).